The chain runs to 167 residues: Translationally-controlled tumor protein homolog (167 aa).

A TCTP domain is found at 1 to 167; the sequence is MLIYQDVLTG…WKDGLKEIKI (167 aa).

It belongs to the TCTP family.

The protein resides in the cytoplasm. The protein localises to the cytoskeleton. In terms of biological role, involved in protein synthesis. Involved in microtubule stabilization. This is Translationally-controlled tumor protein homolog from Cryptococcus neoformans var. neoformans serotype D (strain B-3501A) (Filobasidiella neoformans).